Reading from the N-terminus, the 382-residue chain is Deoxyhypusine synthase (382 aa).

Residues Ser108–Ser112, Thr134–Gly136, Glu140, and Asp257 each bind NAD(+). Glu139–Glu140 is a spermidine binding site. Asp262 lines the spermidine pocket. Gly304 contacts NAD(+). His309 is a binding site for spermidine. Thr329 to Gly330 is a binding site for NAD(+). Spermidine is bound by residues Gly335–Asp337 and Glu344–Lys350. Catalysis depends on Lys350, which acts as the Nucleophile. Residue Asp363 to Val364 participates in NAD(+) binding.

It belongs to the deoxyhypusine synthase family. NAD(+) is required as a cofactor.

It carries out the reaction [eIF5A protein]-L-lysine + spermidine = [eIF5A protein]-deoxyhypusine + propane-1,3-diamine. It participates in protein modification; eIF5A hypusination. Its function is as follows. Catalyzes the NAD-dependent oxidative cleavage of spermidine and the subsequent transfer of the butylamine moiety of spermidine to the epsilon-amino group of a specific lysine residue of the eIF-5A precursor protein to form the intermediate deoxyhypusine residue. The chain is Deoxyhypusine synthase (DYS1) from Eremothecium gossypii (strain ATCC 10895 / CBS 109.51 / FGSC 9923 / NRRL Y-1056) (Yeast).